A 308-amino-acid chain; its full sequence is MANLRDIRNRIDSIENTKQVTRAMKMVAAAKLRRAQEKIFRARPYAYKIGELTNHLKQELDPTAHPFFQAPEEASGALVIVITADRGLCGSFNSDAINTAEHLIETTYAETQSADDLFMLCVGKKGHKHFQKRDYRLVGDYKGVFDGLNFDVAQQVVEDAVEGFERGIWGEVKLVYNEFKNTIVQNQIVEPLLPIPEERFETPVMEEEADGFALPENGRAIDYIFEPGAPTLLDELVPRYLYYQVWRALLESNAAEQGARMVAMDNATSNAEELIEDLTLEYNRARQSAITRELLDITSGAEALEESG.

Belongs to the ATPase gamma chain family. In terms of assembly, F-type ATPases have 2 components, CF(1) - the catalytic core - and CF(0) - the membrane proton channel. CF(1) has five subunits: alpha(3), beta(3), gamma(1), delta(1), epsilon(1). CF(0) has three main subunits: a, b and c.

It localises to the cell inner membrane. In terms of biological role, produces ATP from ADP in the presence of a proton gradient across the membrane. The gamma chain is believed to be important in regulating ATPase activity and the flow of protons through the CF(0) complex. The sequence is that of ATP synthase gamma chain from Salinibacter ruber (strain DSM 13855 / M31).